We begin with the raw amino-acid sequence, 358 residues long: Glycerophosphodiester phosphodiesterase, periplasmic (358 aa).

An N-terminal signal peptide occupies residues methionine 1–alanine 25. In terms of domain architecture, GP-PDE spans lysine 31–leucine 355. The active-site Proton acceptor is the histidine 36. Glutamate 63 and aspartate 65 together coordinate Ca(2+). Histidine 78 functions as the Proton donor in the catalytic mechanism. Position 171 (glutamate 171) interacts with Ca(2+).

This sequence belongs to the glycerophosphoryl diester phosphodiesterase family. As to quaternary structure, homodimer. The cofactor is Ca(2+).

The protein localises to the periplasm. The catalysed reaction is a sn-glycero-3-phosphodiester + H2O = an alcohol + sn-glycerol 3-phosphate + H(+). Glycerophosphodiester phosphodiesterase hydrolyzes glycerophosphodiesters into glycerol-3-phosphate (G3P) and the corresponding alcohol. This chain is Glycerophosphodiester phosphodiesterase, periplasmic (glpQ), found in Escherichia coli (strain K12).